We begin with the raw amino-acid sequence, 1417 residues long: MMALGEPYYSSKPDKDFNFGSTMARRQMTPTMVTKLPKFVRNSPQAYDWIVRGLIFPTTGKTYFQRVVVITGGLEDGTYGSYAFNGSEWVEIYPIEHLNLMSSLKLIHKANALQERLRLSQEEKATLALDVQFLQHENVRLKELIPKPEPRKIQMKWIIVGAVLTFLSLIPGGYAQSQTNNTIFTDMIAACKYSTETLTENLDLRIKLALANITINDKLDAVRQILNFAFVPRAHWLRTVFYYIHYYEMWNIFMFVLAIGTVMRSARPGTDLITLATSHLSGFRMAVLPTIPFHTTMTLWVMNTLMVCYYFDNLLAITMAILAPILGIIFLCFMEDSNYVSQIRGLIATAVLIAGGHACLTLTGTTTSLFVVILTCRFIRMATVFIGTRFEIRDANGKVVATVPTRIKNVAFDFFQKLKQSGVRVGVNDFVVIKPGALCIIDTPEGKGTGFFSGNDIVTAAHVVGNNTFVSVCYEGLVYEAKVRYMPEKDIAFITCPGDLHPTARLKLSKNPDYSCVTVMAYVNEDLVVSTATAMVHGNTLSYAVRTQDGMSGAPVCDKYGRVLAVHQTNTGYTGGAVIIDPADFHPVKAPSQVELLKEEIERLKAQLNSAAENPVTVVTQQPIVTLEQKSVSDSDVVDLVRTAMEREMKVLRDEINGILAPFLQKKKGKTKHGRGRVRRNLRKGVKLLTEEEYRELLEKGLDRETFLDLIDRIIGERSGYPDYDDEDYYDEDDDGWGMVGDDVEFDYTEVINFDQAKPTPAPRTTKPKPCPEPKIEAQPLDLSQKKEKQPEHEQQVAKPTKPQKIEPQPYSQTYGKAPIWESYDFDWDEDDAKFILPAPHRLTKADEIVLGSKIVKLRTIIETAIKTQNYSALPEAVFELDKAAYEAGLEGFLQRVKSKKQGPKKLQRAPEDQGAQNYHSLDAWKSLLEPPRERRCVPANFPLLGHLPINRPIFDDKKPRDDLLGLLPEPTWHAFEEYGPTTWGPQAFVKSFDKFFYAEPIDFFSEYPQLCAFADWATYREFRYLEDTRVIHITATEKNTDSTPAYPKMNYFDTEEDYLEAHGWAPYIREFTRVFKGDKPEVLWYLFLKKEIIKEEKIRNSDIRQIVCADPIYTRIGACLEAHQNALMKQHTDTSVGQCGWSPMEGGFKKTMQRLVNKGNKHFIEFDWTRYDGTIPPALFKHIKEIRWNFINKDQREKYRHVHEWYVDNLLNRHVLLPSGEVTLQTRGNPSGQFSTPMDNNMVNFWLQAFEFAYFNGPDKDLWKTYDTVVYGDDRLSTTPSVPDNYEERVITMYRDIFGMWVKPGKVICRDSIVGLSFCGFTVNENLEPVPTSPEKLMASLLKPYKILPDLESLHGKLLCYQLLAAFMAEDHPFKVYVEHCLSRTAKQLRDSGLPARLTEEQLHRIWRGGPKKCDG.

Positions 105–143 (KLIHKANALQERLRLSQEEKATLALDVQFLQHENVRLKE) form a coiled coil. The next 5 membrane-spanning stretches (helical) occupy residues 155-175 (MKWIIVGAVLTFLSLIPGGYA), 240-260 (VFYYIHYYEMWNIFMFVLAIG), 287-307 (VLPTIPFHTTMTLWVMNTLMV), 314-334 (LLAITMAILAPILGIIFLCFM), and 345-365 (GLIATAVLIAGGHACLTLTGT). Active-site charge relay system; for serine protease activity residues include histidine 462, aspartate 490, and serine 552. Residues 588–615 (VKAPSQVELLKEEIERLKAQLNSAAENP) are a coiled coil. Tyrosine 694 is modified (O-(5'-phospho-RNA)-tyrosine). The disordered stretch occupies residues 753-813 (NFDQAKPTPA…QKIEPQPYSQ (61 aa)). Basic and acidic residues predominate over residues 784 to 796 (SQKKEKQPEHEQQ). Residues 1162 to 1288 (KHFIEFDWTR…TTPSVPDNYE (127 aa)) form the RdRp catalytic domain.

This sequence belongs to the astroviridae polyprotein 1AB family. As to quaternary structure, monomer. In terms of processing, cleaved by the viral and host proteases. The protease is probably autocatalytically cleaved.

It localises to the host membrane. It carries out the reaction RNA(n) + a ribonucleoside 5'-triphosphate = RNA(n+1) + diphosphate. Functionally, responsible for the cleavage of the polyprotein into functional products. Its function is as follows. Protein covalently attached to the 5' extremity of the genomic and subgenomic RNAs. It may serve as a primer for the replicase. The protein is Non-structural polyprotein 1AB (ORF1) of Human astrovirus-8 (HAstV-8).